We begin with the raw amino-acid sequence, 1057 residues long: Protein transport protein Sec16B (1057 aa).

A compositionally biased stretch (polar residues) spans 1 to 15 (MELWVPQTQGRTTGP). Residues 1 to 86 (MELWVPQTQG…VSGADYLKGS (86 aa)) form a disordered region. Residues 45–63 (QDTHKNSKPQQDPRDDHQQ) are compositionally biased toward basic and acidic residues. Phosphoserine occurs at positions 70, 137, 161, and 185. Residues 185 to 220 (SAFGLEQPGEFFPESGAQKQKPSLTSKSNLLQQHES) are disordered. A compositionally biased stretch (polar residues) spans 201-213 (AQKQKPSLTSKSN). Position 245 is a phosphoserine (Ser-245). The segment at 263-708 (APMRFYVPHV…KHKELEQTRT (446 aa)) is central conserved domain (CCD); required for localization to endoplasmic reticulum exit sites. A compositionally biased stretch (basic and acidic residues) spans 704 to 715 (EQTRTGDLRDPD). 2 disordered regions span residues 704-778 (EQTR…TYSE) and 849-1057 (AVIS…SQPC). Residues 737–764 (GQQNYSEDSEYSSALWPTSEQTSLTNPT) are compositionally biased toward polar residues. Thr-856 is subject to Phosphothreonine. Phosphoserine occurs at positions 866, 869, 872, and 881. Basic and acidic residues predominate over residues 883–903 (GADKPPHPDASQKEKLRDGKN). The span at 906–926 (SSGFGWFSWFRSKPASSVSTS) shows a compositional bias: low complexity. The segment covering 927–938 (GDEDSVDSSDSE) has biased composition (acidic residues). Over residues 990–999 (EGVGIGGFSG) the composition is skewed to gly residues. Residues 1028-1043 (NPSQVPQLPTASSLNR) are compositionally biased toward polar residues.

This sequence belongs to the SEC16 family. SEC16A and SEC16B are each present in multiple copies in a heteromeric complex. Interacts with TFG. Interacts with SEC13. Liver, kidney, heart, spleen and brain.

Its subcellular location is the endoplasmic reticulum membrane. The protein localises to the golgi apparatus membrane. Plays a role in the organization of the endoplasmic reticulum exit sites (ERES), also known as transitional endoplasmic reticulum (tER). Required for secretory cargo traffic from the endoplasmic reticulum to the Golgi apparatus. Involved in peroxisome biogenesis. Regulates the transport of peroxisomal biogenesis factors PEX3 and PEX16 from the ER to peroxisomes. The protein is Protein transport protein Sec16B (Sec16b) of Rattus norvegicus (Rat).